The chain runs to 206 residues: uncharacterized protein (206 aa).

The interval 81–132 (EEQQQQQHHVHGPGCSHGHHHDSHANDGHHDEHHDEHHDHVNPDDVEDEFPR) is disordered. The span at 82–96 (EQQQQQHHVHGPGCS) shows a compositional bias: low complexity. The segment covering 103–123 (SHANDGHHDEHHDEHHDHVNP) has biased composition (basic and acidic residues). The helical transmembrane segment at 150-166 (YLTALCLLPIIGSLFSI) threads the bilayer.

It is found in the membrane. This is an uncharacterized protein from Dictyostelium discoideum (Social amoeba).